The chain runs to 292 residues: UDP-3-O-acyl-N-acetylglucosamine deacetylase (292 aa).

3 residues coordinate Zn(2+): His-75, His-231, and Asp-235. His-258 acts as the Proton donor in catalysis.

The protein belongs to the LpxC family. Requires Zn(2+) as cofactor.

It carries out the reaction a UDP-3-O-[(3R)-3-hydroxyacyl]-N-acetyl-alpha-D-glucosamine + H2O = a UDP-3-O-[(3R)-3-hydroxyacyl]-alpha-D-glucosamine + acetate. It functions in the pathway glycolipid biosynthesis; lipid IV(A) biosynthesis; lipid IV(A) from (3R)-3-hydroxytetradecanoyl-[acyl-carrier-protein] and UDP-N-acetyl-alpha-D-glucosamine: step 2/6. Catalyzes the hydrolysis of UDP-3-O-myristoyl-N-acetylglucosamine to form UDP-3-O-myristoylglucosamine and acetate, the committed step in lipid A biosynthesis. In Nautilia profundicola (strain ATCC BAA-1463 / DSM 18972 / AmH), this protein is UDP-3-O-acyl-N-acetylglucosamine deacetylase.